The primary structure comprises 87 residues: U3-theraphotoxin-Hhn1l (87 aa).

The signal sequence occupies residues 1–24; sequence MVNMKASMFLTFAGLVLLFVVCYA. A propeptide spanning residues 25 to 52 is cleaved from the precursor; it reads SESEEKEFPKEMLSSIFAVDNDFKQEER. 3 disulfide bridges follow: cysteine 54–cysteine 67, cysteine 61–cysteine 72, and cysteine 66–cysteine 79.

This sequence belongs to the neurotoxin 10 (Hwtx-1) family. 51 (Hntx-8) subfamily. Hntx-8 sub-subfamily. In terms of tissue distribution, expressed by the venom gland.

The protein localises to the secreted. Functionally, ion channel inhibitor. The protein is U3-theraphotoxin-Hhn1l of Cyriopagopus hainanus (Chinese bird spider).